Reading from the N-terminus, the 338-residue chain is MQVYYDKDADLSIIQGKKVAVIGYGSQGHAHANNLKESGVDVVVGLREGSSSAAKAQKAGLAVASIEDAAAQADVVMILAPDEHQAVIYHNQIAPNVKPGAAIAFAHGFNIHFGQIQPAADLDVIMVAPKGPGHLVRSTYVEGGGVPSLIAIHQDATGKAKDIALSYASANGGGRAGVIETSFREETETDLFGEQAVLCGGITSLIQAGFETLVEAGYAPEMAYFECLHETKLIVDLLYQGGIANMRYSISNTAEYGDFTRGPRVINEESREAMREILAEIQEGEFAREFVLENQAGCPTLTARRRLAAEHEIEVVGERLRGMMPWINANKLVDKDKN.

The KARI N-terminal Rossmann domain occupies 1 to 181 (MQVYYDKDAD…GGGRAGVIET (181 aa)). Residues 24 to 27 (YGSQ), Arg47, Ser50, Ser52, and 82 to 85 (DEHQ) contribute to the NADP(+) site. His107 is a catalytic residue. Position 133 (Gly133) interacts with NADP(+). Residues 182-327 (SFREETETDL…ERLRGMMPWI (146 aa)) form the KARI C-terminal knotted domain. Mg(2+) is bound by residues Asp190, Glu194, Glu226, and Glu230. Ser251 serves as a coordination point for substrate.

Belongs to the ketol-acid reductoisomerase family. Requires Mg(2+) as cofactor.

It carries out the reaction (2R)-2,3-dihydroxy-3-methylbutanoate + NADP(+) = (2S)-2-acetolactate + NADPH + H(+). The enzyme catalyses (2R,3R)-2,3-dihydroxy-3-methylpentanoate + NADP(+) = (S)-2-ethyl-2-hydroxy-3-oxobutanoate + NADPH + H(+). It participates in amino-acid biosynthesis; L-isoleucine biosynthesis; L-isoleucine from 2-oxobutanoate: step 2/4. The protein operates within amino-acid biosynthesis; L-valine biosynthesis; L-valine from pyruvate: step 2/4. In terms of biological role, involved in the biosynthesis of branched-chain amino acids (BCAA). Catalyzes an alkyl-migration followed by a ketol-acid reduction of (S)-2-acetolactate (S2AL) to yield (R)-2,3-dihydroxy-isovalerate. In the isomerase reaction, S2AL is rearranged via a Mg-dependent methyl migration to produce 3-hydroxy-3-methyl-2-ketobutyrate (HMKB). In the reductase reaction, this 2-ketoacid undergoes a metal-dependent reduction by NADPH to yield (R)-2,3-dihydroxy-isovalerate. The sequence is that of Ketol-acid reductoisomerase (NADP(+)) from Alkalilimnicola ehrlichii (strain ATCC BAA-1101 / DSM 17681 / MLHE-1).